The following is a 270-amino-acid chain: 27 kDa core protein (270 aa).

Belongs to the chordopoxvirinae D3 family.

Its subcellular location is the virion. Late protein which is part of a large complex required for early virion morphogenesis. This complex participates in the formation of virosomes and the incorporation of virosomal contents into nascent immature virions. The chain is 27 kDa core protein from Vertebrata (FPV).